The primary structure comprises 439 residues: Taxadien-5-alpha-ol O-acetyltransferase (439 aa).

Residues H164 and D373 each act as proton acceptor in the active site.

It belongs to the plant acyltransferase family.

The catalysed reaction is taxa-4(20),11-dien-5alpha-ol + acetyl-CoA = taxa-4(20),11-dien-5alpha-yl acetate + CoA. The protein operates within alkaloid biosynthesis; taxol biosynthesis; 10-deacetyl-2-debenzoylbaccatin III from taxa-4(20),11-dien-5alpha-ol: step 1/3. This is Taxadien-5-alpha-ol O-acetyltransferase (TAT) from Taxus cuspidata (Japanese yew).